The primary structure comprises 137 residues: Large ribosomal subunit protein uL16 (137 aa).

Belongs to the universal ribosomal protein uL16 family. Part of the 50S ribosomal subunit.

Functionally, binds 23S rRNA and is also seen to make contacts with the A and possibly P site tRNAs. In Pseudomonas entomophila (strain L48), this protein is Large ribosomal subunit protein uL16.